Consider the following 107-residue polypeptide: Ig kappa chain V-VI region XRPC 24 (107 aa).

A framework-1 region spans residues 1-23; sequence EIVLTQSPAITAASLGQKVTITC. Cys23 and Cys87 are joined by a disulfide. The complementarity-determining-1 stretch occupies residues 24 to 33; that stretch reads SASSSVSYMH. The segment at 34-48 is framework-2; that stretch reads WYQQKSGTSPKPWIY. The complementarity-determining-2 stretch occupies residues 49–55; sequence EISKLAS. Residues 56–87 are framework-3; that stretch reads GVPARFSGSGSGTSYSLTISSMEAEDAAIYYC. The complementarity-determining-3 stretch occupies residues 88–96; the sequence is QQWNYPLIT. Residues 97–106 form a framework-4 region; sequence FGSGTKLEIK.

The polypeptide is Ig kappa chain V-VI region XRPC 24 (Mus musculus (Mouse)).